The following is a 301-amino-acid chain: Porphobilinogen deaminase (301 aa).

S-(dipyrrolylmethanemethyl)cysteine is present on C242.

It belongs to the HMBS family. In terms of assembly, monomer. Requires dipyrromethane as cofactor.

It catalyses the reaction 4 porphobilinogen + H2O = hydroxymethylbilane + 4 NH4(+). Its pathway is porphyrin-containing compound metabolism; protoporphyrin-IX biosynthesis; coproporphyrinogen-III from 5-aminolevulinate: step 2/4. In terms of biological role, tetrapolymerization of the monopyrrole PBG into the hydroxymethylbilane pre-uroporphyrinogen in several discrete steps. The sequence is that of Porphobilinogen deaminase from Rickettsia canadensis (strain McKiel).